The sequence spans 802 residues: Copper-exporting P-type ATPase (802 aa).

HMA domains are found at residues 5 to 70 (KKTT…YGVA) and 72 to 138 (ETVE…YDAS). Residues cysteine 16, cysteine 19, cysteine 83, and cysteine 86 each coordinate Cu(+). Transmembrane regions (helical) follow at residues 161–181 (LIISAVLSLPLLMLMFVHLFN), 192–212 (WFQFILATPVQFIIGWQFYVG), 224–244 (MDVLVAVGTSAAYFYSIYEMV), 256–276 (LYFETSAVLITLILFGKYLEA), 411–431 (YFVPIVVGIALLTFIVWITLV), and 438–458 (PALVASISVLVIACPCALGLA). The active-site 4-aspartylphosphate intermediate is aspartate 495. Residues aspartate 690 and aspartate 694 each contribute to the Mg(2+) site. The next 2 helical transmembrane spans lie at 748–767 (LFWAFGYNIAGIPIAALGLL) and 771–790 (VAGAAMALSSVSVVTNALRL).

It belongs to the cation transport ATPase (P-type) (TC 3.A.3) family. Type IB subfamily.

The protein localises to the cell membrane. It catalyses the reaction Cu(+)(in) + ATP + H2O = Cu(+)(out) + ADP + phosphate + H(+). Involved in copper export. The chain is Copper-exporting P-type ATPase (copA) from Staphylococcus aureus (strain USA300 / TCH1516).